Reading from the N-terminus, the 325-residue chain is MGGWSIALHGGAGDIPFSLPPERRKPREEGLRHCLQIGVEALKAQKPPLDVVELVVRELENIEHFNAGIGSVLTNSGTVEMEASIMDGNTMKCGAVSGLSTVLNPISLARLVMDKTPHIYLAFQGAQDFAKQQGVETVDSSHLITAENVERLKLAIEANRVQVDYSQYNYPEPVKDDAEKELPLTNGDSQIGTVGCVAVDSHGNLASATSTGGLVNKMVGRIGDTPLIGAGTYANELCAVSATGKGEEIIRATVARDVAALMEFKGLSLKEAADFVIHERTPKGTVGLIAVSAAGEIAMPFNTTGMFRACATEDGYSEIAIWPTT.

Catalysis depends on Thr193, which acts as the Nucleophile. Substrate-binding positions include 221–224 and 243–246; these read RIGD and TGKG.

This sequence belongs to the Ntn-hydrolase family. Heterotetramer of two alpha and two beta chains arranged as a dimer of alpha/beta heterodimers. Cleaved into an alpha and beta chain by autocatalysis; this activates the enzyme. The N-terminal residue of the beta subunit is responsible for the nucleophile hydrolase activity. In terms of tissue distribution, expressed in ripening seeds and developing nodules.

It carries out the reaction Cleavage of a beta-linked Asp residue from the N-terminus of a polypeptide.. Functionally, degrades proteins damaged by L-isoaspartyl residue formation (also known as beta-Asp residues). Also has L-asparaginase activity, which is used to liberate stored nitrogen during seed development. This Lupinus luteus (European yellow lupine) protein is Isoaspartyl peptidase/L-asparaginase.